A 287-amino-acid polypeptide reads, in one-letter code: Pyridoxal kinase PdxY (287 aa).

Substrate-binding positions include Ser-10 and 45–46; that span reads TQ. Residues Asp-112, Ala-144, Glu-149, Lys-182, and 209–212 each bind ATP; that span reads RPLV. Asp-224 lines the substrate pocket.

The protein belongs to the pyridoxine kinase family. PdxY subfamily. As to quaternary structure, homodimer. It depends on Mg(2+) as a cofactor.

The enzyme catalyses pyridoxal + ATP = pyridoxal 5'-phosphate + ADP + H(+). It functions in the pathway cofactor metabolism; pyridoxal 5'-phosphate salvage; pyridoxal 5'-phosphate from pyridoxal: step 1/1. Its function is as follows. Pyridoxal kinase involved in the salvage pathway of pyridoxal 5'-phosphate (PLP). Catalyzes the phosphorylation of pyridoxal to PLP. The chain is Pyridoxal kinase PdxY from Shigella flexneri.